The primary structure comprises 316 residues: Putative HTH-type transcriptional regulatory protein PYRAB03670 (316 aa).

In terms of domain architecture, HTH cro/C1-type spans 131 to 189 (LKDLREKHGYSLSELANILGVSRKSLQRYEKGDSMVTLEVALRLEEVFDEALVKPINVL). Residues 142-161 (LSELANILGVSRKSLQRYEK) constitute a DNA-binding region (H-T-H motif).

The polypeptide is Putative HTH-type transcriptional regulatory protein PYRAB03670 (Pyrococcus abyssi (strain GE5 / Orsay)).